Reading from the N-terminus, the 147-residue chain is METLAAIGRWLSKQHVVTWCVSRDDELWCANAFYVYDQDTVAFYLLSDEHTRHGQMTGERAKVAGTVNGQPKTVALIRGVQFKGEIRRLSGDEEARMRQRYVKRFPVARMLSAPVWEIRPDEIKFTDNTLGFGKKLHWRRDAGAEQA.

Belongs to the UPF0306 family.

In Klebsiella pneumoniae (strain 342), this protein is UPF0306 protein KPK_0562.